The primary structure comprises 468 residues: 3-isopropylmalate dehydratase large subunit (468 aa).

Residues Cys-348, Cys-409, and Cys-412 each coordinate [4Fe-4S] cluster.

The protein belongs to the aconitase/IPM isomerase family. LeuC type 1 subfamily. As to quaternary structure, heterodimer of LeuC and LeuD. [4Fe-4S] cluster is required as a cofactor.

It catalyses the reaction (2R,3S)-3-isopropylmalate = (2S)-2-isopropylmalate. Its pathway is amino-acid biosynthesis; L-leucine biosynthesis; L-leucine from 3-methyl-2-oxobutanoate: step 2/4. Functionally, catalyzes the isomerization between 2-isopropylmalate and 3-isopropylmalate, via the formation of 2-isopropylmaleate. The polypeptide is 3-isopropylmalate dehydratase large subunit (Dechloromonas aromatica (strain RCB)).